A 444-amino-acid polypeptide reads, in one-letter code: Deoxyguanosinetriphosphate triphosphohydrolase-like protein (444 aa).

Residues 1 to 28 are disordered; that stretch reads MTDAVWNERRLGEDKQRRNDHRSPYQRD. Positions 59-250 constitute an HD domain; sequence RLTHSLEVSQ…MELADDIAYA (192 aa).

This sequence belongs to the dGTPase family. Type 2 subfamily.

The chain is Deoxyguanosinetriphosphate triphosphohydrolase-like protein from Shewanella pealeana (strain ATCC 700345 / ANG-SQ1).